The sequence spans 915 residues: Pentatricopeptide repeat-containing protein At5g65560 (915 aa).

PPR repeat units follow at residues Ile-182–Pro-216, Asn-217–Pro-251, Asp-252–Arg-286, Asn-287–Pro-321, Thr-322–Pro-356, Asn-357–Pro-391, Asn-392–Pro-426, Asn-427–Pro-460, Asp-461–Pro-495, Asp-496–Pro-530, Asn-531–Pro-565, Asn-566–Pro-600, Thr-601–Pro-635, Asp-636–Pro-670, Asp-671–Pro-705, Lys-724–Pro-758, Asn-759–Pro-794, Ser-795–Pro-829, Gln-830–Glu-864, and Asp-865–Phe-899.

The protein belongs to the PPR family. P subfamily.

The protein is Pentatricopeptide repeat-containing protein At5g65560 of Arabidopsis thaliana (Mouse-ear cress).